The chain runs to 191 residues: Putative manganese efflux pump MntP (191 aa).

Transmembrane regions (helical) follow at residues 3–23 (PISILLIGFAMSTDAFAAAIG), 37–57 (LRAGIIFGVIEAITPIIGWLL), 65–85 (VEAFDHWIAFGLLGALGIHMI), 107–129 (WKLALTGFATSIDAMAVGIGLAF), 144–164 (CTLTMVTAGIMFGRVLGSMVG), and 169–189 (IIGGVILVIIGATILYEHLHG).

This sequence belongs to the MntP (TC 9.B.29) family.

It localises to the cell inner membrane. Its function is as follows. Probably functions as a manganese efflux pump. The sequence is that of Putative manganese efflux pump MntP from Stenotrophomonas maltophilia (strain K279a).